The sequence spans 1828 residues: Replicase large subunit (1828 aa).

Residues 61–812 are methyltransferase; the sequence is RRDLSQEQLQ…QASSVTETSD (752 aa). The 221-residue stretch at 82-302 folds into the Alphavirus-like MT domain; sequence VSSNCERGTH…HNLNQLMKYL (221 aa). Residues 701-728 adopt a coiled-coil conformation; it reads AAKHLEKRKEVAQQAVVEAVEAVRELRK. The region spanning 996-1154 is the (+)RNA virus helicase ATP-binding domain; that stretch reads FMMNELVIYR…KLAIDETEYV (159 aa). The segment at 1026–1289 is helicase; it reads DGVPGCGKST…RHRRSLVYYT (264 aa). The 166-residue stretch at 1155 to 1320 folds into the (+)RNA virus helicase C-terminal domain; that stretch reads RLTYRSPVDV…MKNLCSELTK (166 aa). A coiled-coil region spans residues 1432 to 1496; it reads KLQEAVNEFE…KKETRLLHEL (65 aa). Positions 1581-1694 constitute a RdRp catalytic domain; that stretch reads FNAFEIDFSK…LFPKHLTIED (114 aa).

It belongs to the ssRNA positive-strand viruses RNA-directed RNA polymerase family. In terms of assembly, heterodimer of a large and a small subunit.

The enzyme catalyses RNA(n) + a ribonucleoside 5'-triphosphate = RNA(n+1) + diphosphate. It catalyses the reaction ATP + H2O = ADP + phosphate + H(+). Is an RNA-dependent RNA polymerase active in viral RNA replication. In terms of biological role, is a methyltransferase active in RNA capping and an RNA helicase. Methyltransferase displays a cytoplasmic capping enzyme activity. This function is necessary since all viral RNAs are synthesized in the cytoplasm, and host capping enzymes are restricted to the nucleus. Helicase region probably exhibits NTPase and RNA unwinding activities (Potential). The chain is Replicase large subunit (rep) from Hordeum vulgare (Barley).